The chain runs to 751 residues: Polyribonucleotide nucleotidyltransferase (751 aa).

Mg(2+)-binding residues include aspartate 528 and aspartate 534. One can recognise a KH domain in the interval 594 to 653; that stretch reads PRVISVTVPVSKIGEVIGPKGKMINQIQEDTGTDISIEDDGTVYIGATDGPSAEAARSAI. The region spanning 665–737 is the S1 motif domain; it reads GERYLGTVVK…DRGKLSLAPV (73 aa).

It belongs to the polyribonucleotide nucleotidyltransferase family. It depends on Mg(2+) as a cofactor.

The protein localises to the cytoplasm. The catalysed reaction is RNA(n+1) + phosphate = RNA(n) + a ribonucleoside 5'-diphosphate. Its function is as follows. Involved in mRNA degradation. Catalyzes the phosphorolysis of single-stranded polyribonucleotides processively in the 3'- to 5'-direction. The polypeptide is Polyribonucleotide nucleotidyltransferase (Kocuria rhizophila (strain ATCC 9341 / DSM 348 / NBRC 103217 / DC2201)).